The following is a 188-amino-acid chain: Elongation factor P (188 aa).

This sequence belongs to the elongation factor P family.

The protein resides in the cytoplasm. Its pathway is protein biosynthesis; polypeptide chain elongation. Functionally, involved in peptide bond synthesis. Stimulates efficient translation and peptide-bond synthesis on native or reconstituted 70S ribosomes in vitro. Probably functions indirectly by altering the affinity of the ribosome for aminoacyl-tRNA, thus increasing their reactivity as acceptors for peptidyl transferase. The polypeptide is Elongation factor P (Streptomyces avermitilis (strain ATCC 31267 / DSM 46492 / JCM 5070 / NBRC 14893 / NCIMB 12804 / NRRL 8165 / MA-4680)).